Reading from the N-terminus, the 90-residue chain is Photosystem I reaction center subunit PsaK 2 (90 aa).

Transmembrane regions (helical) follow at residues L20–Q42 and L67–I89.

This sequence belongs to the PsaG/PsaK family.

It is found in the cellular thylakoid membrane. This chain is Photosystem I reaction center subunit PsaK 2 (psaK2), found in Synechocystis sp. (strain ATCC 27184 / PCC 6803 / Kazusa).